The chain runs to 123 residues: Large ribosomal subunit protein bL20 (123 aa).

This sequence belongs to the bacterial ribosomal protein bL20 family.

Binds directly to 23S ribosomal RNA and is necessary for the in vitro assembly process of the 50S ribosomal subunit. It is not involved in the protein synthesizing functions of that subunit. The protein is Large ribosomal subunit protein bL20 of Pseudothermotoga lettingae (strain ATCC BAA-301 / DSM 14385 / NBRC 107922 / TMO) (Thermotoga lettingae).